A 516-amino-acid chain; its full sequence is Probable serine/threonine-protein kinase DDB_G0293276 (516 aa).

The interval 69 to 115 is disordered; it reads SIEIDDENPYNTNNNNNSNNNNNNNNNNCNNSNNSNNNKNINSLDNI. The segment covering 79 to 115 has biased composition (low complexity); sequence NTNNNNNSNNNNNNNNNNCNNSNNSNNNKNINSLDNI. Residues 232–479 enclose the Protein kinase domain; it reads YKHVECIGKG…SKDIKNHPYF (248 aa). ATP contacts are provided by residues 238–246 and K261; that span reads IGKGGYGVV. D350 acts as the Proton acceptor in catalysis.

This sequence belongs to the protein kinase superfamily. AGC Ser/Thr protein kinase family.

The catalysed reaction is L-seryl-[protein] + ATP = O-phospho-L-seryl-[protein] + ADP + H(+). The enzyme catalyses L-threonyl-[protein] + ATP = O-phospho-L-threonyl-[protein] + ADP + H(+). The sequence is that of Probable serine/threonine-protein kinase DDB_G0293276 from Dictyostelium discoideum (Social amoeba).